We begin with the raw amino-acid sequence, 292 residues long: 4-hydroxy-tetrahydrodipicolinate synthase (292 aa).

Thr-45 is a pyruvate binding site. Tyr-133 acts as the Proton donor/acceptor in catalysis. Catalysis depends on Lys-161, which acts as the Schiff-base intermediate with substrate. Pyruvate is bound at residue Ile-203.

This sequence belongs to the DapA family. Homotetramer; dimer of dimers.

The protein localises to the cytoplasm. It carries out the reaction L-aspartate 4-semialdehyde + pyruvate = (2S,4S)-4-hydroxy-2,3,4,5-tetrahydrodipicolinate + H2O + H(+). The protein operates within amino-acid biosynthesis; L-lysine biosynthesis via DAP pathway; (S)-tetrahydrodipicolinate from L-aspartate: step 3/4. Its function is as follows. Catalyzes the condensation of (S)-aspartate-beta-semialdehyde [(S)-ASA] and pyruvate to 4-hydroxy-tetrahydrodipicolinate (HTPA). The chain is 4-hydroxy-tetrahydrodipicolinate synthase from Nitrosomonas eutropha (strain DSM 101675 / C91 / Nm57).